Consider the following 451-residue polypeptide: Histidinol dehydrogenase (451 aa).

The disordered stretch occupies residues 1-20 (MLNVTDLRGHTPSKSDIRRA). Residues 7-19 (LRGHTPSKSDIRR) are compositionally biased toward basic and acidic residues. NAD(+) is bound by residues tyrosine 129, glutamine 193, and asparagine 218. Substrate-binding residues include threonine 241, glutamine 263, and histidine 266. Zn(2+) contacts are provided by glutamine 263 and histidine 266. Active-site proton acceptor residues include glutamate 332 and histidine 333. Substrate is bound by residues histidine 333, aspartate 366, glutamate 420, and histidine 425. Residue aspartate 366 coordinates Zn(2+). Zn(2+) is bound at residue histidine 425.

It belongs to the histidinol dehydrogenase family. Requires Zn(2+) as cofactor.

It catalyses the reaction L-histidinol + 2 NAD(+) + H2O = L-histidine + 2 NADH + 3 H(+). It functions in the pathway amino-acid biosynthesis; L-histidine biosynthesis; L-histidine from 5-phospho-alpha-D-ribose 1-diphosphate: step 9/9. Its function is as follows. Catalyzes the sequential NAD-dependent oxidations of L-histidinol to L-histidinaldehyde and then to L-histidine. This chain is Histidinol dehydrogenase, found in Corynebacterium efficiens (strain DSM 44549 / YS-314 / AJ 12310 / JCM 11189 / NBRC 100395).